We begin with the raw amino-acid sequence, 84 residues long: Cytochrome b559 subunit alpha (84 aa).

The chain crosses the membrane as a helical span at residues 24–38 (IIHAVTLPAIFIAGF). His26 contacts heme.

The protein belongs to the PsbE/PsbF family. Heterodimer of an alpha subunit and a beta subunit. PSII is composed of 1 copy each of membrane proteins PsbA, PsbB, PsbC, PsbD, PsbE, PsbF, PsbH, PsbI, PsbJ, PsbK, PsbL, PsbM, PsbT, PsbX, PsbY, Psb30/Ycf12, peripheral proteins PsbO, CyanoQ (PsbQ), PsbU, PsbV and a large number of cofactors. It forms dimeric complexes. It depends on heme b as a cofactor.

It localises to the cellular thylakoid membrane. In terms of biological role, this b-type cytochrome is tightly associated with the reaction center of photosystem II (PSII). PSII is a light-driven water:plastoquinone oxidoreductase that uses light energy to abstract electrons from H(2)O, generating O(2) and a proton gradient subsequently used for ATP formation. It consists of a core antenna complex that captures photons, and an electron transfer chain that converts photonic excitation into a charge separation. The chain is Cytochrome b559 subunit alpha from Prochlorococcus marinus subsp. pastoris (strain CCMP1986 / NIES-2087 / MED4).